Reading from the N-terminus, the 181-residue chain is ATP-dependent protease subunit HslV (181 aa).

Thr7 is an active-site residue. The Na(+) site is built by Gly164, Cys167, and Thr170.

This sequence belongs to the peptidase T1B family. HslV subfamily. As to quaternary structure, a double ring-shaped homohexamer of HslV is capped on each side by a ring-shaped HslU homohexamer. The assembly of the HslU/HslV complex is dependent on binding of ATP.

It localises to the cytoplasm. It carries out the reaction ATP-dependent cleavage of peptide bonds with broad specificity.. Its activity is regulated as follows. Allosterically activated by HslU binding. Functionally, protease subunit of a proteasome-like degradation complex believed to be a general protein degrading machinery. This is ATP-dependent protease subunit HslV from Shouchella clausii (strain KSM-K16) (Alkalihalobacillus clausii).